Reading from the N-terminus, the 467-residue chain is Pup--protein ligase (467 aa).

Glutamate 12 provides a ligand contact to Mg(2+). Residue arginine 56 coordinates ATP. Tyrosine 58 is a Mg(2+) binding site. Residue aspartate 60 is the Proton acceptor of the active site. Mg(2+) is bound at residue glutamate 66. ATP contacts are provided by threonine 69 and tryptophan 431.

It belongs to the Pup ligase/Pup deamidase family. Pup-conjugating enzyme subfamily.

The enzyme catalyses ATP + [prokaryotic ubiquitin-like protein]-L-glutamate + [protein]-L-lysine = ADP + phosphate + N(6)-([prokaryotic ubiquitin-like protein]-gamma-L-glutamyl)-[protein]-L-lysine.. It functions in the pathway protein degradation; proteasomal Pup-dependent pathway. It participates in protein modification; protein pupylation. In terms of biological role, catalyzes the covalent attachment of the prokaryotic ubiquitin-like protein modifier Pup to the proteasomal substrate proteins, thereby targeting them for proteasomal degradation. This tagging system is termed pupylation. The ligation reaction involves the side-chain carboxylate of the C-terminal glutamate of Pup and the side-chain amino group of a substrate lysine. The chain is Pup--protein ligase from Corynebacterium jeikeium (strain K411).